Here is a 188-residue protein sequence, read N- to C-terminus: Ribosome-recycling factor (188 aa).

The protein belongs to the RRF family.

Its subcellular location is the cytoplasm. Responsible for the release of ribosomes from messenger RNA at the termination of protein biosynthesis. May increase the efficiency of translation by recycling ribosomes from one round of translation to another. The chain is Ribosome-recycling factor from Acidiphilium cryptum (strain JF-5).